We begin with the raw amino-acid sequence, 533 residues long: MYSQVEHPAGGYKKLFETVEELSSPVTAHVTGRIPTWLRGSLLRCGPGLFEVGAEPFYHLFDGQALLHKFDFKEGHVTYHRRFVRTDAYVRAMTEKRIVITEFGTYAYPDPCKNIFSRFFSYFKGVEVTDNALVNVYPVGEDYYACTETNFITKINPDTLETIKQVDLCKYVSVNGATAHPHVENDGTVYNIGNCFGKNFSLAYNIIRIPPLQADKEDPMNKSEVVVQFPCSDRFKPSYVHSFGLTPNYIVFVETPVKINLLKFLSSWSLWGANYMDCFESNETMGVWLHVAEKKKGRLLNIKYRTSAFNLFHHINTFEDNGFLIVDLCTWKGFEFVYNYLYLANLRANWDEVKKQAEKAPQPEARRYVLPLRIDKADTGKNLVTLPYTTATATLRSDETVWLEPEVIFSGPRHAFEFPQINYKKYGGKPYTYTYGLGLNHFVPDRLCKLNVKTKETWVWQEPDSYPSEPIFVSHPDALEEDDGVVLSIVISPGSGPKPAYLLILNAKDMSEVARAEVEVNIPVTFHGLFKRA.

Cys112 carries the S-palmitoyl cysteine; in membrane form lipid modification. At Ser117 the chain carries Phosphoserine. His180 lines the Fe cation pocket. Residue Cys231 is the site of S-palmitoyl cysteine; in membrane form attachment. Residues His241 and His313 each contribute to the Fe cation site. Cys329 carries the S-palmitoyl cysteine; in membrane form lipid modification. A Fe cation-binding site is contributed by His527.

This sequence belongs to the carotenoid oxygenase family. It depends on Fe(2+) as a cofactor. Palmitoylation by LRAT regulates ligand binding specificity; the palmitoylated form (membrane form) specifically binds all-trans-retinyl-palmitate, while the soluble unpalmitoylated form binds all-trans-retinol (vitamin A). Retinal pigment epithelium specific.

It localises to the cytoplasm. It is found in the cell membrane. The protein localises to the microsome membrane. It catalyses the reaction an all-trans-retinyl ester + H2O = 11-cis-retinol + a fatty acid + H(+). It carries out the reaction lutein = (3R,3'S)-zeaxanthin. The catalysed reaction is all-trans-retinyl hexadecanoate + H2O = 11-cis-retinol + hexadecanoate + H(+). Its function is as follows. Critical isomerohydrolase in the retinoid cycle involved in regeneration of 11-cis-retinal, the chromophore of rod and cone opsins. Catalyzes the cleavage and isomerization of all-trans-retinyl fatty acid esters to 11-cis-retinol which is further oxidized by 11-cis retinol dehydrogenase to 11-cis-retinal for use as visual chromophore. Essential for the production of 11-cis retinal for both rod and cone photoreceptors. Also capable of catalyzing the isomerization of lutein to meso-zeaxanthin an eye-specific carotenoid. The soluble form binds vitamin A (all-trans-retinol), making it available for LRAT processing to all-trans-retinyl ester. The membrane form, palmitoylated by LRAT, binds all-trans-retinyl esters, making them available for IMH (isomerohydrolase) processing to all-cis-retinol. The soluble form is regenerated by transferring its palmitoyl groups onto 11-cis-retinol, a reaction catalyzed by LRAT. This chain is Retinoid isomerohydrolase (RPE65), found in Gallus gallus (Chicken).